The primary structure comprises 404 residues: 8-amino-7-oxononanoate synthase (404 aa).

Position 20 (Arg20) interacts with substrate. A pyridoxal 5'-phosphate-binding site is contributed by 116 to 117 (GY). His141 provides a ligand contact to substrate. Residues Ser187, His215, and Thr243 each coordinate pyridoxal 5'-phosphate. Lys246 is subject to N6-(pyridoxal phosphate)lysine. Substrate is bound at residue Thr366.

This sequence belongs to the class-II pyridoxal-phosphate-dependent aminotransferase family. BioF subfamily. As to quaternary structure, homodimer. The cofactor is pyridoxal 5'-phosphate.

The catalysed reaction is 6-carboxyhexanoyl-[ACP] + L-alanine + H(+) = (8S)-8-amino-7-oxononanoate + holo-[ACP] + CO2. The protein operates within cofactor biosynthesis; biotin biosynthesis. Catalyzes the decarboxylative condensation of pimeloyl-[acyl-carrier protein] and L-alanine to produce 8-amino-7-oxononanoate (AON), [acyl-carrier protein], and carbon dioxide. This chain is 8-amino-7-oxononanoate synthase, found in Cupriavidus necator (strain ATCC 17699 / DSM 428 / KCTC 22496 / NCIMB 10442 / H16 / Stanier 337) (Ralstonia eutropha).